A 264-amino-acid polypeptide reads, in one-letter code: Thiazole synthase (264 aa).

The active-site Schiff-base intermediate with DXP is the Lys100. 1-deoxy-D-xylulose 5-phosphate contacts are provided by residues Gly161, 187–188, and 209–210; these read AG and NT.

Belongs to the ThiG family. As to quaternary structure, homotetramer. Forms heterodimers with either ThiH or ThiS.

The protein localises to the cytoplasm. It catalyses the reaction [ThiS sulfur-carrier protein]-C-terminal-Gly-aminoethanethioate + 2-iminoacetate + 1-deoxy-D-xylulose 5-phosphate = [ThiS sulfur-carrier protein]-C-terminal Gly-Gly + 2-[(2R,5Z)-2-carboxy-4-methylthiazol-5(2H)-ylidene]ethyl phosphate + 2 H2O + H(+). The protein operates within cofactor biosynthesis; thiamine diphosphate biosynthesis. Its function is as follows. Catalyzes the rearrangement of 1-deoxy-D-xylulose 5-phosphate (DXP) to produce the thiazole phosphate moiety of thiamine. Sulfur is provided by the thiocarboxylate moiety of the carrier protein ThiS. In vitro, sulfur can be provided by H(2)S. This is Thiazole synthase from Nitrosospira multiformis (strain ATCC 25196 / NCIMB 11849 / C 71).